Consider the following 72-residue polypeptide: Brevinin-2GHc (72 aa).

A signal peptide spans 1–22 (MFTMKKSLLLLFFLGMISLSLC). Residues 23–42 (EQERGADEDEGEVEEQIKRS) constitute a propeptide that is removed on maturation. Cys-64 and Cys-70 are joined by a disulfide.

As to expression, expressed by the skin glands.

It localises to the secreted. Antimicrobial peptide. Active against the Gram-positive bacteria S.aureus FDA209P (MIC=9.8 ug/ml) and B.subtilis ATCC 6633 (MIC&gt;64 ug/ml), and the Gram-negative bacteria E.coli O111 (MIC=19.6 ug/ml) and E.coli ATCC 25922 (MIC=9.8 ug/ml). Not active against the fungus C.albicans. The protein is Brevinin-2GHc of Sylvirana guentheri (Gunther's frog).